Consider the following 126-residue polypeptide: UPF0102 protein PMT_0624 (126 aa).

The protein belongs to the UPF0102 family.

The polypeptide is UPF0102 protein PMT_0624 (Prochlorococcus marinus (strain MIT 9313)).